The chain runs to 1941 residues: Myosin-7B (1941 aa).

The 51-residue stretch at 30-80 (DGKKRVWVPDEQDAYVEAEVKTEATGGKVTVETKDQKVLTVRETEMQPMNP) folds into the Myosin N-terminal SH3-like domain. A Myosin motor domain is found at 84–785 (DLLEDMAMMT…LLGILEELRD (702 aa)). An ATP-binding site is contributed by 177–184 (GESGAGKT). 2 actin-binding regions span residues 662 to 684 (LNKL…VPNE) and 764 to 778 (QFGH…GLLG). In terms of domain architecture, IQ spans 788-817 (LAKVLTLLQARSRGRLMRLEYQRMLGGRDA). A coiled-coil region spans residues 846-1935 (LLRSAQAEEE…KLRARSRDAL (1090 aa)). The segment at 1887 to 1941 (RQFEEAEQQASTNLAKYRKAQHELDDAEERADMAETQANKLRARSRDALGPKHKE) is disordered. Basic and acidic residues predominate over residues 1930 to 1941 (RSRDALGPKHKE).

The protein belongs to the TRAFAC class myosin-kinesin ATPase superfamily. Myosin family. As to quaternary structure, muscle myosin is a hexameric protein that consists of 2 heavy chain subunits (MHC), 2 alkali light chain subunits (MLC) and 2 regulatory light chain subunits (MLC-2).

It localises to the membrane. Involved in muscle contraction. The protein is Myosin-7B (Myh7b) of Mus musculus (Mouse).